A 128-amino-acid polypeptide reads, in one-letter code: Small ribosomal subunit protein uS11 (128 aa).

It belongs to the universal ribosomal protein uS11 family. As to quaternary structure, part of the 30S ribosomal subunit. Interacts with proteins S7 and S18. Binds to IF-3.

In terms of biological role, located on the platform of the 30S subunit, it bridges several disparate RNA helices of the 16S rRNA. Forms part of the Shine-Dalgarno cleft in the 70S ribosome. This is Small ribosomal subunit protein uS11 from Desulforudis audaxviator (strain MP104C).